The sequence spans 210 residues: Uridine kinase (210 aa).

Glycine 12–threonine 19 lines the ATP pocket.

This sequence belongs to the uridine kinase family.

The protein localises to the cytoplasm. The enzyme catalyses uridine + ATP = UMP + ADP + H(+). The catalysed reaction is cytidine + ATP = CMP + ADP + H(+). It participates in pyrimidine metabolism; CTP biosynthesis via salvage pathway; CTP from cytidine: step 1/3. Its pathway is pyrimidine metabolism; UMP biosynthesis via salvage pathway; UMP from uridine: step 1/1. The chain is Uridine kinase from Leuconostoc citreum (strain KM20).